We begin with the raw amino-acid sequence, 344 residues long: Phosphoribosylformylglycinamidine cyclo-ligase (344 aa).

This sequence belongs to the AIR synthase family.

It localises to the cytoplasm. The enzyme catalyses 2-formamido-N(1)-(5-O-phospho-beta-D-ribosyl)acetamidine + ATP = 5-amino-1-(5-phospho-beta-D-ribosyl)imidazole + ADP + phosphate + H(+). Its pathway is purine metabolism; IMP biosynthesis via de novo pathway; 5-amino-1-(5-phospho-D-ribosyl)imidazole from N(2)-formyl-N(1)-(5-phospho-D-ribosyl)glycinamide: step 2/2. The protein is Phosphoribosylformylglycinamidine cyclo-ligase of Synechococcus sp. (strain RCC307).